We begin with the raw amino-acid sequence, 1004 residues long: Glutamate [NMDA] receptor subunit 1 (1004 aa).

An N-terminal signal peptide occupies residues 1–39 (MAGTDSPAAARFVYRCLLFAPAIVVGLLLPLTLPPIAAA). Residues 40 to 585 (QRHTASDNPS…TLVSFLQPFS (546 aa)) lie on the Extracellular side of the membrane. Asparagine 270, asparagine 326, asparagine 357, asparagine 409, asparagine 466, asparagine 493, and asparagine 513 each carry an N-linked (GlcNAc...) asparagine glycan. Glycine is bound by residues 542-544 (PLT) and arginine 549. The helical transmembrane segment at 586–606 (NTLWILVMVSVHVVALVLYLL) threads the bilayer. Topologically, residues 607–663 (DRFSPFGRFKLSHSDSNEEKALNLSSAVWFAWGVLLNSGIGEGTPRSFSARVLGMVW) are cytoplasmic. A helical membrane pass occupies residues 664-684 (AGFAMIIVASYTANLAAFLVL). Over 685 to 843 (ERPKTKLSGI…KTPNTLGLKN (159 aa)) the chain is Extracellular. Asparagine 705 carries N-linked (GlcNAc...) asparagine glycosylation. Serine 715 and aspartate 759 together coordinate glycine. The chain crosses the membrane as a helical span at residues 844 to 864 (MAGVFILVGVGIAGGVGLIII). Residues 865 to 1004 (EVIYKKHQVK…YTSDVSHLVV (140 aa)) lie on the Cytoplasmic side of the membrane. Residues 980–1004 (TRPQQNILPPRYSPGYTSDVSHLVV) are disordered. Residues 994-1004 (GYTSDVSHLVV) are compositionally biased toward polar residues.

This sequence belongs to the glutamate-gated ion channel (TC 1.A.10.1) family. Forms a heteromeric NMDA channel with Nmdar2.

Its subcellular location is the cell membrane. The protein resides in the postsynaptic cell membrane. The protein localises to the postsynaptic density. Its function is as follows. NMDA receptor subtype of glutamate-gated ion channels with high calcium permeability and voltage-dependent sensitivity to magnesium. Mediated by glycine. This protein plays a key role in synaptic plasticity, synaptogenesis, excitotoxicity, memory acquisition and learning. It mediates neuronal functions in glutamate neurotransmission. Is involved in the cell surface targeting of NMDA receptors. Plays a role in associative learning and in long-term memory consolidation. In Drosophila pseudoobscura pseudoobscura (Fruit fly), this protein is Glutamate [NMDA] receptor subunit 1.